The chain runs to 378 residues: Pyrimidine monooxygenase RutA (378 aa).

Residues 65 to 66 (IK), N131, E140, 156 to 157 (RY), and S206 each bind FMN.

Belongs to the NtaA/SnaA/DszA monooxygenase family. RutA subfamily.

It catalyses the reaction uracil + FMNH2 + NADH + O2 = (Z)-3-ureidoacrylate + FMN + NAD(+) + H2O + H(+). It carries out the reaction thymine + FMNH2 + NADH + O2 = (Z)-2-methylureidoacrylate + FMN + NAD(+) + H2O + H(+). Its function is as follows. Catalyzes the pyrimidine ring opening between N-3 and C-4 by an unusual flavin hydroperoxide-catalyzed mechanism, adding oxygen atoms in the process to yield ureidoacrylate peracid, that immediately reacts with FMN forming ureidoacrylate and FMN-N(5)-oxide. The FMN-N(5)-oxide reacts spontaneously with NADH to produce FMN. Requires the flavin reductase RutF to regenerate FMN in vivo. The sequence is that of Pyrimidine monooxygenase RutA from Cronobacter turicensis (strain DSM 18703 / CCUG 55852 / LMG 23827 / z3032).